A 686-amino-acid chain; its full sequence is Elongation factor G 2 (686 aa).

Residues 7–280 (TTVRNLGILA…AVVAYLPSPL (274 aa)) form the tr-type G domain. GTP contacts are provided by residues 16–23 (AHVDAGKT), 80–84 (DTPGH), and 134–137 (NKMD).

Belongs to the TRAFAC class translation factor GTPase superfamily. Classic translation factor GTPase family. EF-G/EF-2 subfamily.

It localises to the cytoplasm. Functionally, catalyzes the GTP-dependent ribosomal translocation step during translation elongation. During this step, the ribosome changes from the pre-translocational (PRE) to the post-translocational (POST) state as the newly formed A-site-bound peptidyl-tRNA and P-site-bound deacylated tRNA move to the P and E sites, respectively. Catalyzes the coordinated movement of the two tRNA molecules, the mRNA and conformational changes in the ribosome. The polypeptide is Elongation factor G 2 (fusB) (Streptomyces coelicolor (strain ATCC BAA-471 / A3(2) / M145)).